Consider the following 909-residue polypeptide: Protein translocase subunit SecA (909 aa).

ATP-binding positions include Gln87, 105-109 (GEGKT), and Asp507. Disordered stretches follow at residues 567–586 (RRID…PGSS) and 859–909 (YSEA…GKLD). The span at 865-889 (EHQSVTEGHEAKQQPFVRKSDKIGR) shows a compositional bias: basic and acidic residues. Zn(2+) contacts are provided by Cys893, Cys895, Cys904, and His905. Basic residues predominate over residues 899–909 (RKYKQCHGKLD).

This sequence belongs to the SecA family. As to quaternary structure, monomer and homodimer. Part of the essential Sec protein translocation apparatus which comprises SecA, SecYEG and auxiliary proteins SecDF-YajC and YidC. It depends on Zn(2+) as a cofactor.

It is found in the cell inner membrane. The protein resides in the cytoplasm. It carries out the reaction ATP + H2O + cellular proteinSide 1 = ADP + phosphate + cellular proteinSide 2.. In terms of biological role, part of the Sec protein translocase complex. Interacts with the SecYEG preprotein conducting channel. Has a central role in coupling the hydrolysis of ATP to the transfer of proteins into and across the cell membrane, serving both as a receptor for the preprotein-SecB complex and as an ATP-driven molecular motor driving the stepwise translocation of polypeptide chains across the membrane. This chain is Protein translocase subunit SecA, found in Nitrosomonas eutropha (strain DSM 101675 / C91 / Nm57).